The chain runs to 283 residues: 32 kDa beta-galactoside-binding lectin (283 aa).

2 Galectin domains span residues 17-148 (YRSL…VHWG) and 156-283 (YESG…IQIQ). 217 to 223 (WGNEERE) provides a ligand contact to a beta-D-galactoside.

(Microbial infection) Interacts (via domain galectin 2) with goat TMEM147. Interacts (via domain galectin 1) with goat TMEM63A.

Its subcellular location is the membrane. Its function is as follows. Binds galactose. Exerts immunomodulatory effects on host peripheral blood mononuclear cells to down-regulate host immune response. Hemagglutinates human, dog, rabbit, chicken and mouse erythrocytes but does not hemagglutinate the erythrocytes of goat, its natural host. This Haemonchus contortus (Barber pole worm) protein is 32 kDa beta-galactoside-binding lectin (GAL-1).